A 509-amino-acid polypeptide reads, in one-letter code: Transcription factor atf-7 (509 aa).

Over residues Thr283 to Ser303 the composition is skewed to polar residues. 2 disordered regions span residues Thr283–Ile318 and Asn337–Arg400. The segment covering Ser308 to Ile318 has biased composition (basic and acidic residues). Low complexity predominate over residues Asn337 to Asn364. The span at Pro390–Arg400 shows a compositional bias: basic and acidic residues. Positions Asp391–Leu464 constitute a bZIP domain. The segment at Arg393–Lys413 is basic motif. Residues Met419–Val450 are leucine-zipper.

The protein belongs to the bZIP family. As to quaternary structure, interacts with serine/threonine kinase pmk-1; perhaps in a manner dependent on dual specificity protein kinase sek-1. As to expression, expressed in intestinal cells.

The protein localises to the nucleus. It localises to the chromosome. Its function is as follows. Transcription factor which regulates the transcription of various genes, including those involved in innate immunity and oxidative stress responses. Binds to promoter regions of genes, probably at 5'-[GACGTCA]-3' consensus sequences. Together with transcription factor daf-19, involved in regulation of the serotonergic response of ADF neurons to pathogenic food. Modulates response to infection by the Gram-negative bacterium P.aeruginosa, acting downstream of the p38 signal transduction pathway effector serine/threonine kinase pmk-1. May act with transcription factor elt-2 to control p38 gene induction in response to bacterial infection. May be phosphorylated by pmk-1. Regulates transcription of the metallothionein gene, mtl-1, perhaps acting downstream of pmk-1. The chain is Transcription factor atf-7 from Caenorhabditis elegans.